The sequence spans 592 residues: Arginine--tRNA ligase (592 aa).

Positions 134-144 (ANPTGPLHVGH) match the 'HIGH' region motif.

It belongs to the class-I aminoacyl-tRNA synthetase family. In terms of assembly, monomer.

The protein resides in the cytoplasm. The catalysed reaction is tRNA(Arg) + L-arginine + ATP = L-arginyl-tRNA(Arg) + AMP + diphosphate. The polypeptide is Arginine--tRNA ligase (Coxiella burnetii (strain CbuG_Q212) (Coxiella burnetii (strain Q212))).